The chain runs to 127 residues: Large ribosomal subunit protein bL19 (127 aa).

The protein belongs to the bacterial ribosomal protein bL19 family.

Functionally, this protein is located at the 30S-50S ribosomal subunit interface and may play a role in the structure and function of the aminoacyl-tRNA binding site. The chain is Large ribosomal subunit protein bL19 from Paraburkholderia phymatum (strain DSM 17167 / CIP 108236 / LMG 21445 / STM815) (Burkholderia phymatum).